We begin with the raw amino-acid sequence, 327 residues long: Aspartate--ammonia ligase (327 aa).

The protein belongs to the class-II aminoacyl-tRNA synthetase family. AsnA subfamily.

It is found in the cytoplasm. The catalysed reaction is L-aspartate + NH4(+) + ATP = L-asparagine + AMP + diphosphate + H(+). Its pathway is amino-acid biosynthesis; L-asparagine biosynthesis; L-asparagine from L-aspartate (ammonia route): step 1/1. This is Aspartate--ammonia ligase from Bacillus cereus (strain B4264).